The chain runs to 147 residues: Cyanate hydratase (147 aa).

Residues Arg-88, Glu-91, and Ser-114 contribute to the active site.

This sequence belongs to the cyanase family.

It catalyses the reaction cyanate + hydrogencarbonate + 3 H(+) = NH4(+) + 2 CO2. Catalyzes the reaction of cyanate with bicarbonate to produce ammonia and carbon dioxide. The protein is Cyanate hydratase of Prochlorococcus marinus (strain NATL2A).